The sequence spans 490 residues: Tektin-3 (490 aa).

O-linked (GalNAc...) threonine glycans are attached at residues threonine 7 and threonine 9. Residues asparagine 41, asparagine 86, asparagine 111, and asparagine 276 are each glycosylated (N-linked (GlcNAc...) asparagine). Residues 419–456 (RLVNEVYEVDETIQTLQQRLRDSEDTLQSLAHTKATLE) are a coiled coil.

The protein belongs to the tektin family. As to quaternary structure, microtubule inner protein component of sperm flagellar doublet microtubules. Interacts with TEKT1, TEKT2, TEKT4 and TEKT5. Interacts with CCDC38. Post-translationally, N- and O-glycosylated. May be proteolytically processed during the epididymal transit of spermatozoa. In terms of processing, ubiquitinated, leading to its degradation. Deubiquitinated by USP16, promoting its stability. Expressed in epididymal sperm (at protein level).

The protein localises to the cytoplasm. It is found in the cytoskeleton. The protein resides in the cilium axoneme. Its subcellular location is the flagellum axoneme. It localises to the cytoplasmic vesicle. The protein localises to the secretory vesicle. It is found in the acrosome outer membrane. Its function is as follows. Microtubule inner protein (MIP) part of the dynein-decorated doublet microtubules (DMTs) in cilia and flagellar axoneme. Forms filamentous polymers in the walls of ciliary and flagellar microtubules. Required for normal sperm mobility. This Rattus norvegicus (Rat) protein is Tektin-3 (Tekt3).